A 121-amino-acid polypeptide reads, in one-letter code: Large ribosomal subunit protein bL12 (121 aa).

Belongs to the bacterial ribosomal protein bL12 family. Homodimer. Part of the ribosomal stalk of the 50S ribosomal subunit. Forms a multimeric L10(L12)X complex, where L10 forms an elongated spine to which 2 to 4 L12 dimers bind in a sequential fashion. Binds GTP-bound translation factors.

Its function is as follows. Forms part of the ribosomal stalk which helps the ribosome interact with GTP-bound translation factors. Is thus essential for accurate translation. The protein is Large ribosomal subunit protein bL12 of Xanthomonas euvesicatoria pv. vesicatoria (strain 85-10) (Xanthomonas campestris pv. vesicatoria).